Here is a 202-residue protein sequence, read N- to C-terminus: Glycerol-3-phosphate acyltransferase (202 aa).

4 helical membrane passes run 1–21 (MTLI…FGVL), 84–104 (AVAA…FLHF), 116–136 (ILLG…LAVA), and 143–163 (SLAA…FLGF).

This sequence belongs to the PlsY family. Probably interacts with PlsX.

It localises to the cell inner membrane. It carries out the reaction an acyl phosphate + sn-glycerol 3-phosphate = a 1-acyl-sn-glycero-3-phosphate + phosphate. Its pathway is lipid metabolism; phospholipid metabolism. Its function is as follows. Catalyzes the transfer of an acyl group from acyl-phosphate (acyl-PO(4)) to glycerol-3-phosphate (G3P) to form lysophosphatidic acid (LPA). This enzyme utilizes acyl-phosphate as fatty acyl donor, but not acyl-CoA or acyl-ACP. This Nitrosospira multiformis (strain ATCC 25196 / NCIMB 11849 / C 71) protein is Glycerol-3-phosphate acyltransferase.